The following is a 319-amino-acid chain: Acetyl-coenzyme A carboxylase carboxyl transferase subunit alpha (319 aa).

The 262-residue stretch at 35-296 (NIDEEVHRLR…KAQLLADLAD (262 aa)) folds into the CoA carboxyltransferase C-terminal domain.

This sequence belongs to the AccA family. As to quaternary structure, acetyl-CoA carboxylase is a heterohexamer composed of biotin carboxyl carrier protein (AccB), biotin carboxylase (AccC) and two subunits each of ACCase subunit alpha (AccA) and ACCase subunit beta (AccD).

The protein localises to the cytoplasm. It catalyses the reaction N(6)-carboxybiotinyl-L-lysyl-[protein] + acetyl-CoA = N(6)-biotinyl-L-lysyl-[protein] + malonyl-CoA. Its pathway is lipid metabolism; malonyl-CoA biosynthesis; malonyl-CoA from acetyl-CoA: step 1/1. In terms of biological role, component of the acetyl coenzyme A carboxylase (ACC) complex. First, biotin carboxylase catalyzes the carboxylation of biotin on its carrier protein (BCCP) and then the CO(2) group is transferred by the carboxyltransferase to acetyl-CoA to form malonyl-CoA. This is Acetyl-coenzyme A carboxylase carboxyl transferase subunit alpha from Klebsiella pneumoniae (strain 342).